We begin with the raw amino-acid sequence, 160 residues long: uncharacterized protein (160 aa).

Positions 7-151 (LLINYKTLEE…NPLIWHPDMD (145 aa)) constitute an N-acetyltransferase domain.

This is an uncharacterized protein from Bacillus subtilis (strain 168).